The following is a 31-amino-acid chain: Protamine-Z (31 aa).

The interval 1 to 31 (ARRRRSRRASRPVRRRRPRRVSRRRRARRRR) is disordered.

Testis.

It localises to the nucleus. It is found in the chromosome. Functionally, protamines substitute for histones in the chromatin of sperm during the haploid phase of spermatogenesis. They compact sperm DNA into a highly condensed, stable and inactive complex. The protein is Protamine-Z of Clupea harengus (Atlantic herring).